A 1286-amino-acid chain; its full sequence is DNA-directed RNA polymerase 147 kDa polypeptide (1286 aa).

The protein belongs to the poxviridae DNA-directed RNA polymerase 147 kDa subunit family. In terms of assembly, the DNA-dependent RNA polymerase used for intermediate and late genes expression consists of eight subunits Rpo30/OPG66, Rpo7/OPG90, Rpo22/OPG103, Rpo147/OPG105, Rpo18/OPG119, Rpo19/OPG131, Rpo132/OPG151 and Rpo35/OPG156. The same holoenzyme, with the addition of the transcription-specificity factor OPG109, is used for early gene expression.

The protein localises to the virion. The enzyme catalyses RNA(n) + a ribonucleoside 5'-triphosphate = RNA(n+1) + diphosphate. Functionally, part of the DNA-dependent RNA polymerase which catalyzes the transcription of viral DNA into RNA using the four ribonucleoside triphosphates as substrates. Responsible for the transcription of early, intermediate and late genes. DNA-dependent RNA polymerase associates with the early transcription factor (ETF), itself composed of OPG118 and OPG133, thereby allowing the early genes transcription. Late transcription, and probably also intermediate transcription, require newly synthesized RNA polymerase. This Variola virus (isolate Human/India/Ind3/1967) (VARV) protein is DNA-directed RNA polymerase 147 kDa polypeptide (OPG105).